Here is a 331-residue protein sequence, read N- to C-terminus: Glucokinase (331 aa).

Position 14 to 19 (14 to 19 (GDIGGT)) interacts with ATP.

Belongs to the bacterial glucokinase family.

The protein localises to the cytoplasm. The catalysed reaction is D-glucose + ATP = D-glucose 6-phosphate + ADP + H(+). The sequence is that of Glucokinase from Aromatoleum aromaticum (strain DSM 19018 / LMG 30748 / EbN1) (Azoarcus sp. (strain EbN1)).